The chain runs to 337 residues: NADH-quinone oxidoreductase subunit H (337 aa).

A run of 8 helical transmembrane segments spans residues 13 to 33 (IIIVLQCLAIILPMLGAIAYL), 82 to 102 (AVFIIAPLMTFILALIAWAVI), 115 to 135 (VGVLYLFAVSGLGVYGIIMAG), 154 to 174 (MVSYEVAMGLIIIAVILSAGS), 187 to 207 (GVWYFIPHFPMFVMFLVSILA), 248 to 268 (ILMSGITAILFLGGWLPPVDI), 274 to 294 (IPGIIWFFLKIALILFVFLWV), and 313 to 333 (VFLPGSLIWVVLTAGFLVTFD).

The protein belongs to the complex I subunit 1 family. In terms of assembly, NDH-1 is composed of 14 different subunits. Subunits NuoA, H, J, K, L, M, N constitute the membrane sector of the complex.

It is found in the cell inner membrane. It carries out the reaction a quinone + NADH + 5 H(+)(in) = a quinol + NAD(+) + 4 H(+)(out). Its function is as follows. NDH-1 shuttles electrons from NADH, via FMN and iron-sulfur (Fe-S) centers, to quinones in the respiratory chain. The immediate electron acceptor for the enzyme in this species is believed to be ubiquinone. Couples the redox reaction to proton translocation (for every two electrons transferred, four hydrogen ions are translocated across the cytoplasmic membrane), and thus conserves the redox energy in a proton gradient. This subunit may bind ubiquinone. This Rhodospirillum rubrum (strain ATCC 11170 / ATH 1.1.1 / DSM 467 / LMG 4362 / NCIMB 8255 / S1) protein is NADH-quinone oxidoreductase subunit H.